Reading from the N-terminus, the 685-residue chain is Pentatricopeptide repeat-containing protein At5g19020, mitochondrial (685 aa).

A mitochondrion-targeting transit peptide spans 1 to 23 (MIKLIRFFRSRRCWVISLQARCF). PPR repeat units follow at residues 40 to 74 (TERA…GLDS), 75 to 105 (NGYI…HAKL), 106 to 136 (DSAS…MPER), 137 to 171 (SCVS…GIML), 172 to 206 (NEVT…KLEG), 207 to 237 (RVFV…MPER), 238 to 268 (NLVT…ITEK), 269 to 303 (DIVS…GMKP), 304 to 338 (SEVM…GFDC), 339 to 369 (YDFL…SVKD), 370 to 400 (HIAS…THDK), 401 to 435 (DIFS…SQVK), 437 to 471 (DAIT…TIPP), 472 to 502 (NDNL…TKNI), 506 to 540 (TISP…PIKP), 541 to 576 (NSIT…GIEP), and 577 to 607 (DIKH…MPVK). The type E motif; degenerate stretch occupies residues 612–685 (IWGMLLSASR…EWSRAFSGVV (74 aa)).

It belongs to the PPR family. PCMP-E subfamily.

Its subcellular location is the mitochondrion. The polypeptide is Pentatricopeptide repeat-containing protein At5g19020, mitochondrial (PCMP-E42) (Arabidopsis thaliana (Mouse-ear cress)).